Reading from the N-terminus, the 462-residue chain is UDP-N-acetylmuramoylalanine--D-glutamate ligase (462 aa).

Residue 109–115 (GTDGKST) participates in ATP binding.

This sequence belongs to the MurCDEF family.

It is found in the cytoplasm. The enzyme catalyses UDP-N-acetyl-alpha-D-muramoyl-L-alanine + D-glutamate + ATP = UDP-N-acetyl-alpha-D-muramoyl-L-alanyl-D-glutamate + ADP + phosphate + H(+). Its pathway is cell wall biogenesis; peptidoglycan biosynthesis. Functionally, cell wall formation. Catalyzes the addition of glutamate to the nucleotide precursor UDP-N-acetylmuramoyl-L-alanine (UMA). This is UDP-N-acetylmuramoylalanine--D-glutamate ligase from Leptospira borgpetersenii serovar Hardjo-bovis (strain JB197).